The following is a 216-amino-acid chain: Pyridoxine/pyridoxamine 5'-phosphate oxidase (216 aa).

Substrate is bound by residues 9–12 and R67; that span reads RLSY. FMN contacts are provided by residues 62 to 67, 77 to 78, K84, and Q106; these read RIVLLR and YT. Positions 124, 128, and 132 each coordinate substrate. FMN is bound by residues 142 to 143 and W188; that span reads QS. Residue 194-196 coordinates substrate; that stretch reads RMH. R198 serves as a coordination point for FMN.

The protein belongs to the pyridoxamine 5'-phosphate oxidase family. In terms of assembly, homodimer. FMN serves as cofactor.

The enzyme catalyses pyridoxamine 5'-phosphate + O2 + H2O = pyridoxal 5'-phosphate + H2O2 + NH4(+). It catalyses the reaction pyridoxine 5'-phosphate + O2 = pyridoxal 5'-phosphate + H2O2. It participates in cofactor metabolism; pyridoxal 5'-phosphate salvage; pyridoxal 5'-phosphate from pyridoxamine 5'-phosphate: step 1/1. The protein operates within cofactor metabolism; pyridoxal 5'-phosphate salvage; pyridoxal 5'-phosphate from pyridoxine 5'-phosphate: step 1/1. Its function is as follows. Catalyzes the oxidation of either pyridoxine 5'-phosphate (PNP) or pyridoxamine 5'-phosphate (PMP) into pyridoxal 5'-phosphate (PLP). The chain is Pyridoxine/pyridoxamine 5'-phosphate oxidase from Psychrobacter arcticus (strain DSM 17307 / VKM B-2377 / 273-4).